Consider the following 703-residue polypeptide: Elongation factor G 2 (703 aa).

Residues 8 to 291 form the tr-type G domain; that stretch reads ELYRNIGIVA…AVIDYLPAPS (284 aa). GTP-binding positions include 17–24, 89–93, and 143–146; these read AHVDAGKT, DTPGH, and NKMD.

It belongs to the TRAFAC class translation factor GTPase superfamily. Classic translation factor GTPase family. EF-G/EF-2 subfamily.

Its subcellular location is the cytoplasm. Functionally, catalyzes the GTP-dependent ribosomal translocation step during translation elongation. During this step, the ribosome changes from the pre-translocational (PRE) to the post-translocational (POST) state as the newly formed A-site-bound peptidyl-tRNA and P-site-bound deacylated tRNA move to the P and E sites, respectively. Catalyzes the coordinated movement of the two tRNA molecules, the mRNA and conformational changes in the ribosome. The sequence is that of Elongation factor G 2 (fusB) from Pseudomonas putida (strain ATCC 47054 / DSM 6125 / CFBP 8728 / NCIMB 11950 / KT2440).